A 122-amino-acid polypeptide reads, in one-letter code: Large ribosomal subunit protein uL14 (122 aa).

It belongs to the universal ribosomal protein uL14 family. As to quaternary structure, part of the 50S ribosomal subunit. Forms a cluster with proteins L3 and L19. In the 70S ribosome, L14 and L19 interact and together make contacts with the 16S rRNA in bridges B5 and B8.

In terms of biological role, binds to 23S rRNA. Forms part of two intersubunit bridges in the 70S ribosome. The sequence is that of Large ribosomal subunit protein uL14 from Gluconacetobacter diazotrophicus (strain ATCC 49037 / DSM 5601 / CCUG 37298 / CIP 103539 / LMG 7603 / PAl5).